The sequence spans 1123 residues: Eukaryotic translation initiation factor 2-alpha kinase PK4 (1123 aa).

The tract at residues Met1–Lys30 is disordered. Residues Asn21 to Lys30 are compositionally biased toward basic and acidic residues. Residues Ile245–Val253 and Lys270 each bind ATP. Disordered regions lie at residues Phe409–Gly493, Arg572–Asp609, and Glu742–Ile800. The span at Lys419 to His428 shows a compositional bias: basic and acidic residues. The segment covering His455 to Ile477 has biased composition (basic residues). 5 consecutive repeat copies span residues Asp576 to Gly582, Asp583 to Gly589, Asp590 to Gly596, Asp597 to Gly603, and Asp604 to Asp610. A 5 X 7 AA tandem repeat of D-K-N-[GE]-L-D-[GD] region spans residues Asp576–Asp610. One can recognise a Protein kinase domain in the interval Thr678–Leu1049. The span at Asn743–Asn754 shows a compositional bias: acidic residues. The active-site Proton acceptor is the Asp886. Residue Thr953 is modified to Phosphothreonine.

It belongs to the protein kinase superfamily. Ser/Thr protein kinase family. GCN2 subfamily. As to quaternary structure, may form oligomers in response to stress; oligomerization may result in catalytic activity. Interacts with BIP; the interaction is disrupted in response to stress. Auto-phosphorylated.

Its subcellular location is the endoplasmic reticulum membrane. The enzyme catalyses L-seryl-[protein] + ATP = O-phospho-L-seryl-[protein] + ADP + H(+). It catalyses the reaction L-threonyl-[protein] + ATP = O-phospho-L-threonyl-[protein] + ADP + H(+). Dissociation from BIP and oligomerization, may results autophosphorylation and kinase activity induction. During the asexual blood stage, phosphorylates translation factor eIF2alpha in late schizonts resulting in protein translation inhibition. Plays a role in trophozoite differentiation into schizonts. This is Eukaryotic translation initiation factor 2-alpha kinase PK4 from Plasmodium falciparum.